Here is a 347-residue protein sequence, read N- to C-terminus: Phenylalanine--tRNA ligase alpha subunit (347 aa).

E261 is a binding site for Mg(2+).

Belongs to the class-II aminoacyl-tRNA synthetase family. Phe-tRNA synthetase alpha subunit type 1 subfamily. In terms of assembly, tetramer of two alpha and two beta subunits. It depends on Mg(2+) as a cofactor.

The protein localises to the cytoplasm. The catalysed reaction is tRNA(Phe) + L-phenylalanine + ATP = L-phenylalanyl-tRNA(Phe) + AMP + diphosphate + H(+). In Streptococcus thermophilus (strain CNRZ 1066), this protein is Phenylalanine--tRNA ligase alpha subunit.